Consider the following 159-residue polypeptide: Probable minor fimbrial protein (159 aa).

Residues 1-6 constitute a propeptide, leader sequence; the sequence is MKKMHG. Phenylalanine 7 carries the post-translational modification N-methylphenylalanine. A helical membrane pass occupies residues 7 to 29; that stretch reads FTLIELMIVVAIIGVLASIALMQ. Disulfide bonds link cysteine 56/cysteine 71 and cysteine 140/cysteine 153.

Belongs to the N-Me-Phe pilin family. In terms of assembly, the pili are polar flexible filaments of about 5.4 nanometers diameter and 2.5 micrometers average length; they consist of only a single polypeptide chain arranged in a helical configuration of five subunits per turn in the assembled pilus.

It is found in the fimbrium. The protein localises to the membrane. This chain is Probable minor fimbrial protein (fimZ), found in Dichelobacter nodosus (Bacteroides nodosus).